A 320-amino-acid chain; its full sequence is Cytochrome f (320 aa).

Residues 1–35 form the signal peptide; the sequence is MENRKTFSWLKEQMIRSISVSIMIYVITRTSISNA. Heme-binding residues include tyrosine 36, cysteine 56, cysteine 59, and histidine 60. The helical transmembrane segment at 286–306 threads the bilayer; sequence VQGLLFFFASVILAQVFLVLK.

Belongs to the cytochrome f family. As to quaternary structure, the 4 large subunits of the cytochrome b6-f complex are cytochrome b6, subunit IV (17 kDa polypeptide, petD), cytochrome f and the Rieske protein, while the 4 small subunits are PetG, PetL, PetM and PetN. The complex functions as a dimer. Heme serves as cofactor.

It localises to the plastid. It is found in the chloroplast thylakoid membrane. Component of the cytochrome b6-f complex, which mediates electron transfer between photosystem II (PSII) and photosystem I (PSI), cyclic electron flow around PSI, and state transitions. The protein is Cytochrome f of Saccharum hybrid (Sugarcane).